Reading from the N-terminus, the 306-residue chain is Shugoshin (306 aa).

Residues 28–75 (NFKSTNESLIKKNLQLKQQLSQCTKALEKLRNENIALREQNQELIDAT) are a coiled coil. Disordered regions lie at residues 122 to 196 (PEPS…GRRS) and 223 to 306 (IAPS…DTFF). The span at 133–161 (PKMECNLEKLDESPVRNFPRSDYEEENKS) shows a compositional bias: basic and acidic residues. Over residues 167 to 181 (NGPSSSSSMTQNLEN) the composition is skewed to polar residues. Over residues 230 to 241 (GGPPKKAPPRKA) the composition is skewed to pro residues.

It belongs to the shugoshin family.

Its subcellular location is the nucleus. It is found in the chromosome. The protein resides in the centromere. In terms of biological role, plays a central role in chromosome cohesion during cell division by preventing premature dissociation of cohesin complex from centromeres after prophase, when most of cohesin complex dissociates from chromosomes arms. This is Shugoshin (sgo-1) from Caenorhabditis briggsae.